Consider the following 543-residue polypeptide: MDETIGMKKEFHDISVGDIEVGESAPVTEDDKMLLNLGYKQEFKREFSLLAVFGQSFGSMGLCPSLVGSMAFSMNCGAGGMVWSWFVGATCLLPIAFALSELASSMPTSGSLYFWTAYLSPPKYRAFLSWFLGYVLALAYSTGFASTIYAAAGLVQATASVANPSYAPTKYEEYGIYVALSFACSALIVLPTKFLARFSSFNVVFQICTILIFIISLAASSTSETRNTGSYIFGNFENYSGWTNMGWSFILCFTTPVWVLSGFESCATIVEEAKNASKAAPIAIISSLTVSLFMGFCIMITIAGTMGHDFSSILNTPYGEPVSQVLYNNLGKRGAVGVSAVLIIALCFNCSALCLASSREIFAFARDKGLPGSWIFRKLTPGGIPLNAILLVNLYTIIVGLLMLVNVTAISSIFNLAIIAFFISYSLPLVCRLLFNRLNPGKFYCGKFSKPISIVAVAWLWFMALMLLFPSYQNPNKVEMNWAIVVLGFTVFFCVGYYYLPKYGGKTFFKGPVKTVDENVTEGVTVDFQADHVSKEDDGKSYN.

6 consecutive transmembrane segments (helical) span residues 47 to 67 (FSLL…PSLV), 79 to 99 (GGMV…AFAL), 126 to 146 (AFLS…GFAS), 176 to 196 (IYVA…KFLA), 198 to 218 (FSSF…ISLA), and 249 to 269 (FILC…CATI). An N-linked (GlcNAc...) asparagine glycan is attached at Asn275. The next 3 helical transmembrane spans lie at 282-302 (IAII…MITI), 335-355 (AVGV…ALCL), and 384-404 (IPLN…LLML). A glycan (N-linked (GlcNAc...) asparagine) is linked at Asn406. Transmembrane regions (helical) follow at residues 410–430 (ISSI…LPLV), 452–472 (ISIV…FPSY), and 480–500 (MNWA…YYYL). Residue Asn519 is glycosylated (N-linked (GlcNAc...) asparagine).

Belongs to the amino acid-polyamine-organocation (APC) superfamily.

The protein resides in the membrane. This is an uncharacterized protein from Schizosaccharomyces pombe (strain 972 / ATCC 24843) (Fission yeast).